Consider the following 940-residue polypeptide: Isoleucine--tRNA ligase (940 aa).

A 'HIGH' region motif is present at residues 58–68; it reads PYANGSIHIGH. L-isoleucyl-5'-AMP is bound at residue glutamate 564. The short motif at 605–609 is the 'KMSKS' region element; that stretch reads KMSKS. Lysine 608 serves as a coordination point for ATP. Zn(2+) is bound by residues cysteine 903, cysteine 906, cysteine 923, and cysteine 926.

It belongs to the class-I aminoacyl-tRNA synthetase family. IleS type 1 subfamily. In terms of assembly, monomer. Requires Zn(2+) as cofactor.

It localises to the cytoplasm. It catalyses the reaction tRNA(Ile) + L-isoleucine + ATP = L-isoleucyl-tRNA(Ile) + AMP + diphosphate. Catalyzes the attachment of isoleucine to tRNA(Ile). As IleRS can inadvertently accommodate and process structurally similar amino acids such as valine, to avoid such errors it has two additional distinct tRNA(Ile)-dependent editing activities. One activity is designated as 'pretransfer' editing and involves the hydrolysis of activated Val-AMP. The other activity is designated 'posttransfer' editing and involves deacylation of mischarged Val-tRNA(Ile). The protein is Isoleucine--tRNA ligase of Shewanella baltica (strain OS223).